The following is a 261-amino-acid chain: Prostate-specific antigen (261 aa).

An N-terminal signal peptide occupies residues 1–17; that stretch reads MWVPVVFLTLSVTWIGA. Positions 18–24 are cleaved as a propeptide — activation peptide; the sequence is APLILSR. In terms of domain architecture, Peptidase S1 spans 25–258; that stretch reads IVGGWECEKH…YRKWIKDTIV (234 aa). 5 disulfides stabilise this stretch: C31/C173, C50/C66, C152/C219, C184/C198, and C209/C234. The active-site Charge relay system is the H65. A glycan (N-linked (GlcNAc...) asparagine) is linked at N69. D120 functions as the Charge relay system in the catalytic mechanism. S213 (charge relay system) is an active-site residue.

Belongs to the peptidase S1 family. Kallikrein subfamily. Forms a heterodimer with SERPINA5.

Its subcellular location is the secreted. The catalysed reaction is Preferential cleavage: -Tyr-|-Xaa-.. With respect to regulation, inhibited by SERPINA5. Activity is strongly inhibited by Zn2+, 100 times more abundant in semen than in serum. This inhibition is relieved by exposure to semenogelins, which are avid zinc binders. Functionally, hydrolyzes semenogelin-1 thus leading to the liquefaction of the seminal coagulum. This Homo sapiens (Human) protein is Prostate-specific antigen (KLK3).